The chain runs to 430 residues: Serine--tRNA ligase (430 aa).

An L-serine-binding site is contributed by 235 to 237; the sequence is TAE. Residues 266 to 268 and Val-282 each bind ATP; that span reads RRE. Glu-289 provides a ligand contact to L-serine. 353-356 lines the ATP pocket; sequence EASS. Ser-389 provides a ligand contact to L-serine.

This sequence belongs to the class-II aminoacyl-tRNA synthetase family. Type-1 seryl-tRNA synthetase subfamily. Homodimer. The tRNA molecule binds across the dimer.

The protein resides in the cytoplasm. It catalyses the reaction tRNA(Ser) + L-serine + ATP = L-seryl-tRNA(Ser) + AMP + diphosphate + H(+). It carries out the reaction tRNA(Sec) + L-serine + ATP = L-seryl-tRNA(Sec) + AMP + diphosphate + H(+). Its pathway is aminoacyl-tRNA biosynthesis; selenocysteinyl-tRNA(Sec) biosynthesis; L-seryl-tRNA(Sec) from L-serine and tRNA(Sec): step 1/1. Catalyzes the attachment of serine to tRNA(Ser). Is also able to aminoacylate tRNA(Sec) with serine, to form the misacylated tRNA L-seryl-tRNA(Sec), which will be further converted into selenocysteinyl-tRNA(Sec). This Chlorobium phaeovibrioides (strain DSM 265 / 1930) (Prosthecochloris vibrioformis (strain DSM 265)) protein is Serine--tRNA ligase.